A 384-amino-acid polypeptide reads, in one-letter code: MTWQQKIDDALTARRSADALRRRYAVTQGAGRWLVANERQYLNFSSNDYLGLSHHPQIIRAWQQGAERFGVGSGGSGHVSGYSVAHQALEEALAGWLGYSRALLFISGFAANQAVIAALMAKDDRIVADRLSHASLLEAANLSPATLRRFTHNDPQHLARLLDAPCGGQQLVVTEGIFSMDGDGAPLAEIHRAARQRNAWLLVDDAHGIGVTGDEGRGSCWRQQVKPELLIVTFGKGFGVSGAAILCSESVADYLLQFARHLIYSTSMPPAQAQALSAALAVIRSPEGADRREKLAALIQRFRSGVKASDFTLANSHSAIQPLIVGDNARALRLADTLREQGCWVSAIRPPTVPAGTARLRLTLTQAHEAQDIDRLLEVLDGAG.

Substrate is bound at residue R21. 108-109 contacts pyridoxal 5'-phosphate; the sequence is GF. A substrate-binding site is contributed by H133. 3 residues coordinate pyridoxal 5'-phosphate: S179, H207, and T233. At K236 the chain carries N6-(pyridoxal phosphate)lysine. T352 is a substrate binding site.

This sequence belongs to the class-II pyridoxal-phosphate-dependent aminotransferase family. BioF subfamily. In terms of assembly, homodimer. Pyridoxal 5'-phosphate serves as cofactor.

The catalysed reaction is 6-carboxyhexanoyl-[ACP] + L-alanine + H(+) = (8S)-8-amino-7-oxononanoate + holo-[ACP] + CO2. It functions in the pathway cofactor biosynthesis; biotin biosynthesis. Its function is as follows. Catalyzes the decarboxylative condensation of pimeloyl-[acyl-carrier protein] and L-alanine to produce 8-amino-7-oxononanoate (AON), [acyl-carrier protein], and carbon dioxide. This chain is 8-amino-7-oxononanoate synthase, found in Citrobacter koseri (strain ATCC BAA-895 / CDC 4225-83 / SGSC4696).